A 139-amino-acid polypeptide reads, in one-letter code: Diuretic hormone 41 (139 aa).

Residues 1–20 form the signal peptide; that stretch reads MMWWALWCAVVVAAGSGVAA. A propeptide spanning residues 21 to 79 is cleaved from the precursor; it reads APAPDSLSPLDMVQMDSSAPDDETLYAMSPMAARYSAGAPWLYLLADMPRDSQTGSGRV. I122 is modified (isoleucine amide).

The protein belongs to the sauvagine/corticotropin-releasing factor/urotensin I family. Expressed in corpora cardiaca (CC), corpora allata (CA), antennal lobe (AL) and gnathal ganglion (GNG) (at protein level). Expression in CC and CA detected in all animals, in GNG in most animals, expression in AL detected in few animals (at protein level).

The protein localises to the secreted. Regulation of fluid secretion. The protein is Diuretic hormone 41 of Agrotis ipsilon (Black cutworm moth).